The sequence spans 1002 residues: Protein SMAX1-LIKE 7 (1002 aa).

Positions 8-185 constitute a Clp R domain; that stretch reads ARQCLTEETA…DVLHPPVTSQ (178 aa). Repeat stretches follow at residues 12-86 and 103-185; these read LTEE…LDRL and VSNS…VTSQ. An EAR motif is present at residues 854–858; that stretch reads LDLNL.

It belongs to the ClpA/ClpB family. Interacts with TPL/TPR in an EAR-motif dependent manner. Interacts with TPL, TPR1, TPR2 and TPR4. Interacts with MAX2 and TPR2. Interacts with D14. The interaction with D14 occurs in the presence of (2'R) stereoisomers of strigolactones, but not (2'S) stereoisomers. Ubiquitinated upon strigolactone treatment. Strigolactone, but not karrikin, triggers rapid SCF(MAX2)-dependent degradation. In terms of tissue distribution, expressed in axillary branches and roots. Detected in seedlings and leaves. Expressed in the primary rosette buds and expanding leaves of adult rosettes, the vasculature of the hypocotyls, cotyledons, and mature roots, and in the midvein and petioles of young leaves.

The protein resides in the nucleus. In terms of biological role, probable component of a transcriptional corepressor complex involved in branching control. Regulates cotyledon expansion and lateral root growth, but not germination or hypocotyl elongation. Promotes auxin transport and PIN1 accumulation in the stem and represses BRC1/TCP18 expression in axillary buds. This chain is Protein SMAX1-LIKE 7, found in Arabidopsis thaliana (Mouse-ear cress).